The primary structure comprises 34 residues: MEVNILAFIAIVLFISVPTAFLLIIYVKTVSESN.

The helical transmembrane segment at isoleucine 5–isoleucine 25 threads the bilayer.

The protein belongs to the PsbM family. In terms of assembly, PSII is composed of 1 copy each of membrane proteins PsbA, PsbB, PsbC, PsbD, PsbE, PsbF, PsbH, PsbI, PsbJ, PsbK, PsbL, PsbM, PsbT, PsbX, PsbY, PsbZ, Psb30/Ycf12, at least 3 peripheral proteins of the oxygen-evolving complex and a large number of cofactors. It forms dimeric complexes.

Its subcellular location is the plastid. It is found in the chloroplast thylakoid membrane. Functionally, one of the components of the core complex of photosystem II (PSII). PSII is a light-driven water:plastoquinone oxidoreductase that uses light energy to abstract electrons from H(2)O, generating O(2) and a proton gradient subsequently used for ATP formation. It consists of a core antenna complex that captures photons, and an electron transfer chain that converts photonic excitation into a charge separation. This subunit is found at the monomer-monomer interface. The chain is Photosystem II reaction center protein M from Cycas taitungensis (Prince sago).